The chain runs to 231 residues: Large ribosomal subunit protein uL1 (231 aa).

This sequence belongs to the universal ribosomal protein uL1 family. In terms of assembly, part of the 50S ribosomal subunit.

Functionally, binds directly to 23S rRNA. The L1 stalk is quite mobile in the ribosome, and is involved in E site tRNA release. In terms of biological role, protein L1 is also a translational repressor protein, it controls the translation of the L11 operon by binding to its mRNA. The protein is Large ribosomal subunit protein uL1 of Acinetobacter baumannii (strain AB307-0294).